Reading from the N-terminus, the 1202-residue chain is Putative late blight resistance protein homolog R1B-8 (1202 aa).

Coiled-coil stretches lie at residues 345-368 (RYSDSLAFLKNQLQVIQTEFESLQ) and 437-459 (LRMNEEIVGFEDVIEKLRNRLLN). Positions 426-741 (IARTSSQLAR…ISESFIKSCE (316 aa)) constitute an NB-ARC domain. Residue 471–478 (GMPGLGKT) coordinates ATP. LRR repeat units lie at residues 865–889 (FKFLKVLDLEHQVIIDFIPTELFYL), 908–936 (LWNLETLILKSRSASKHNRVLLPSTVWDM), 1011–1036 (PIRLEILKLYNRSKAFKTIPFCISAP), 1040–1059 (YLKLSRFYLDSQYLSETADH), 1060–1084 (LKHLEVLKLSCVEFGDHGEWEVSNG), 1086–1111 (FPQLKILKLEYVSLMKWIVADDVFPN), and 1128–1151 (SCFMDILSLKYIKVDEYSESVVQS).

Belongs to the disease resistance NB-LRR family.

It is found in the cytoplasm. The protein localises to the membrane. Confers resistance to late blight (Phytophthora infestans) races carrying the avirulence gene Avr1. Resistance proteins guard the plant against pathogens that contain an appropriate avirulence protein via an indirect interaction with this avirulence protein. That triggers a defense system including the hypersensitive response, which restricts the pathogen growth. The protein is Putative late blight resistance protein homolog R1B-8 (R1B-8) of Solanum demissum (Wild potato).